The primary structure comprises 116 residues: Iron-sulfur cluster insertion protein ErpA (116 aa).

Cysteine 44, cysteine 108, and cysteine 110 together coordinate iron-sulfur cluster.

The protein belongs to the HesB/IscA family. Homodimer. The cofactor is iron-sulfur cluster.

In terms of biological role, required for insertion of 4Fe-4S clusters for at least IspG. This is Iron-sulfur cluster insertion protein ErpA from Shewanella sp. (strain ANA-3).